A 158-amino-acid chain; its full sequence is Complexin-3 (158 aa).

Positions 14–47 are disordered; it reads KNLTGSLGGGEDKGDGDKSAAEAQGMSREEYEEY. Residues 23-33 are compositionally biased toward basic and acidic residues; it reads GEDKGDGDKSA. A coiled-coil region spans residues 39–74; sequence MSREEYEEYQKQLVEEKMERDAQFTQRKAERATLRS. The residue at position 155 (Cys155) is a Cysteine methyl ester. Residue Cys155 is the site of S-farnesyl cysteine attachment. The propeptide at 156 to 158 is removed in mature form; it reads HIM.

It belongs to the complexin/synaphin family. In terms of assembly, binds to the SNARE core complex containing SNAP25, VAMP2 and STX1A. In terms of processing, farnesylation mediates presynaptic targeting. Present in many brain regions, including hippocampus and cerebellum (at protein level). Expressed in the retina (at protein level). Expressed in retinal amacrine cells (at protein level). Expressed in retinal photoreceptor ribbon synapses. Expressed in the retinal inner nuclear layer, at bipolar cells (at protein level). Expressed in cone photoreceptor synaptic terminals (at protein level).

It localises to the synapse. Its subcellular location is the cell membrane. Complexin that regulates SNARE protein complex-mediated synaptic vesicle fusion. Required for the maintenance of synaptic ultrastructure in the adult retina. Positively regulates synaptic transmission through synaptic vesicle availability and exocytosis of neurotransmitters at photoreceptor ribbon synapses in the retina. Suppresses tonic photoreceptor activity and baseline 'noise' by suppression of Ca(2+) vesicle tonic release and the facilitation of evoked synchronous and asynchronous Ca(2+) vesicle release. The sequence is that of Complexin-3 (Cplx3) from Mus musculus (Mouse).